Reading from the N-terminus, the 432-residue chain is DEAD-box ATP-dependent RNA helicase 56 (432 aa).

Residues 1–28 (MAEAEVKDNEVYEEDLVDYEEEVENGTD) adopt a coiled-coil conformation. The short motif at 51–79 (SGFRDFLLKPELLRAIQDCGFEHPSEVQH) is the Q motif element. The Helicase ATP-binding domain maps to 82 to 255 (IPQAILGMDV…KKFMQDPMEI (174 aa)). 95–102 (AKSGMGKT) is a binding site for ATP. The DEAD box signature appears at 202 to 205 (DECD). The Helicase C-terminal domain maps to 283 to 428 (KLNDLLDALD…ELPEQIDTST (146 aa)).

This sequence belongs to the DEAD box helicase family. DECD subfamily. Homodimer and heterodimer with AIP2. Interacts with API5.

Its subcellular location is the nucleus. The catalysed reaction is ATP + H2O = ADP + phosphate + H(+). In terms of biological role, ATP-binding RNA helicase involved in pre-mRNA splicing. Required for the export of mRNA out of the nucleus. Required for tapetal programmed cell death (PCD) and degeneration during anther development. Forms dimer with AIP2 and binds the promoter region of the cysteine protease CP1. Can complement the yeast RNA helicase SUB2. Plants silencing AIP1 and AIP2 are male sterile. This is DEAD-box ATP-dependent RNA helicase 56 from Oryza sativa subsp. japonica (Rice).